Reading from the N-terminus, the 199-residue chain is 7-methyl-GTP pyrophosphatase (199 aa).

Aspartate 76 (proton acceptor) is an active-site residue.

The protein belongs to the Maf family. YceF subfamily. A divalent metal cation is required as a cofactor.

Its subcellular location is the cytoplasm. It catalyses the reaction N(7)-methyl-GTP + H2O = N(7)-methyl-GMP + diphosphate + H(+). Functionally, nucleoside triphosphate pyrophosphatase that hydrolyzes 7-methyl-GTP (m(7)GTP). May have a dual role in cell division arrest and in preventing the incorporation of modified nucleotides into cellular nucleic acids. The sequence is that of 7-methyl-GTP pyrophosphatase from Hahella chejuensis (strain KCTC 2396).